Reading from the N-terminus, the 405-residue chain is Cysteine desulfurase IscS (405 aa).

Residues 75–76, Asn155, Gln183, and 203–205 each bind pyridoxal 5'-phosphate; these read AT and SGH. N6-(pyridoxal phosphate)lysine is present on Lys206. Thr243 is a binding site for pyridoxal 5'-phosphate. Cys329 acts as the Cysteine persulfide intermediate in catalysis. Cys329 contributes to the [2Fe-2S] cluster binding site.

The protein belongs to the class-V pyridoxal-phosphate-dependent aminotransferase family. NifS/IscS subfamily. Homodimer. Forms a heterotetramer with IscU, interacts with other sulfur acceptors. Pyridoxal 5'-phosphate is required as a cofactor.

The protein localises to the cytoplasm. It catalyses the reaction (sulfur carrier)-H + L-cysteine = (sulfur carrier)-SH + L-alanine. It functions in the pathway cofactor biosynthesis; iron-sulfur cluster biosynthesis. Functionally, master enzyme that delivers sulfur to a number of partners involved in Fe-S cluster assembly, tRNA modification or cofactor biosynthesis. Catalyzes the removal of elemental sulfur atoms from cysteine to produce alanine. Functions as a sulfur delivery protein for Fe-S cluster synthesis onto IscU, an Fe-S scaffold assembly protein, as well as other S acceptor proteins. This is Cysteine desulfurase IscS from Pseudoalteromonas translucida (strain TAC 125).